The sequence spans 175 residues: ATP synthase subunit b, chloroplastic (175 aa).

The chain crosses the membrane as a helical span at residues 24–46 (VLNLAVVLAIVLTYVGDALRGLL).

Belongs to the ATPase B chain family. F-type ATPases have 2 components, F(1) - the catalytic core - and F(0) - the membrane proton channel. F(1) has five subunits: alpha(3), beta(3), gamma(1), delta(1), epsilon(1). F(0) has four main subunits: a(1), b(1), b'(1) and c(10-14). The alpha and beta chains form an alternating ring which encloses part of the gamma chain. F(1) is attached to F(0) by a central stalk formed by the gamma and epsilon chains, while a peripheral stalk is formed by the delta, b and b' chains.

Its subcellular location is the plastid. It localises to the chloroplast thylakoid membrane. Its function is as follows. F(1)F(0) ATP synthase produces ATP from ADP in the presence of a proton or sodium gradient. F-type ATPases consist of two structural domains, F(1) containing the extramembraneous catalytic core and F(0) containing the membrane proton channel, linked together by a central stalk and a peripheral stalk. During catalysis, ATP synthesis in the catalytic domain of F(1) is coupled via a rotary mechanism of the central stalk subunits to proton translocation. Component of the F(0) channel, it forms part of the peripheral stalk, linking F(1) to F(0). The sequence is that of ATP synthase subunit b, chloroplastic from Chlorella vulgaris (Green alga).